Consider the following 97-residue polypeptide: DNA/RNA-binding protein Alba 1 (97 aa).

Ser2 bears the N-acetylserine; by ard1 acetylase mark. RNA is bound by residues Lys16, Lys17, and Tyr22. Lys16 is modified (N6,N6,N6-trimethyllysine; alternate). At Lys16 the chain carries N6,N6-dimethyllysine; alternate. Lys16 is subject to N6-acetyllysine; alternate. Lys16 is subject to N6-methyllysine; alternate. A Deamidated asparagine; partial modification is found at Asn31. A Deamidated glutamine; partial modification is found at Gln32. Lys40 is subject to N6-methyllysine; partial. Residues Arg42 and Arg44 each coordinate RNA. Lys48 is modified (N6-acetyllysine; partial). Asp51 carries the post-translational modification Aspartate methyl ester; partial. Asn58 bears the Deamidated asparagine; partial mark. Position 64 is an N6-acetyllysine; alternate; partial (Lys64). The residue at position 64 (Lys64) is an N6-methyllysine; alternate; partial. An N6-acetyllysine; partial modification is found at Lys68. At Gln75 the chain carries N5-methylglutamine; partial. Asp81 carries the post-translational modification Aspartate methyl ester; partial. Lys97 bears the N6-methyllysine; partial mark.

It belongs to the histone-like Alba family. As to quaternary structure, forms homodimers and higher order oligomers, e.g. homotetramers. Acetylated. Acetylation at Lys-16 by the Pat acetylase decreases DNA-binding affinity. Deacetylation at Lys-16 by the CobB deacetylase increases DNA-binding affinity. Acetylation at Ser-2 is involved in the regulation of the turnover of the protein.

It localises to the cytoplasm. Its subcellular location is the chromosome. Binds double-stranded DNA tightly but without sequence specificity. Involved in DNA compaction. Possesses DNA endonuclease activity. Prevents transcription after DNA binding. Binds single-stranded DNA and RNA in vitro. Binds rRNA and mRNA in vivo. May play a role in maintaining the structural and functional stability of RNA, and, perhaps, ribosomes. Binds double-stranded RNA (dsRNA) and exhibits RNA chaperone activity. Required for normal growth. This chain is DNA/RNA-binding protein Alba 1, found in Saccharolobus islandicus (strain REY15A) (Sulfolobus islandicus).